We begin with the raw amino-acid sequence, 85 residues long: Large ribosomal subunit protein bL27 (85 aa).

The interval 1-21 (MAHKKGGGSTKNGRDSNPKYL) is disordered.

This sequence belongs to the bacterial ribosomal protein bL27 family.

The chain is Large ribosomal subunit protein bL27 from Chlorobium chlorochromatii (strain CaD3).